Reading from the N-terminus, the 94-residue chain is Protein P19 (94 aa).

Binds to single-stranded DNA (ssDNA). The chain is Protein P19 (XIX) from Acinetobacter calcoaceticus (Arthrobacter siderocapsulatus).